The primary structure comprises 384 residues: GDSL esterase/lipase At1g71691 (384 aa).

An N-terminal signal peptide occupies residues M1–G27. S62 acts as the Nucleophile in catalysis. Catalysis depends on residues D348 and H351.

This sequence belongs to the 'GDSL' lipolytic enzyme family.

The protein resides in the secreted. The polypeptide is GDSL esterase/lipase At1g71691 (Arabidopsis thaliana (Mouse-ear cress)).